Here is a 277-residue protein sequence, read N- to C-terminus: Putative phosphoenolpyruvate synthase regulatory protein (277 aa).

157-164 (GVSRSGKT) serves as a coordination point for ADP.

This sequence belongs to the pyruvate, phosphate/water dikinase regulatory protein family. PSRP subfamily.

The enzyme catalyses [pyruvate, water dikinase] + ADP = [pyruvate, water dikinase]-phosphate + AMP + H(+). The catalysed reaction is [pyruvate, water dikinase]-phosphate + phosphate + H(+) = [pyruvate, water dikinase] + diphosphate. In terms of biological role, bifunctional serine/threonine kinase and phosphorylase involved in the regulation of the phosphoenolpyruvate synthase (PEPS) by catalyzing its phosphorylation/dephosphorylation. The chain is Putative phosphoenolpyruvate synthase regulatory protein from Vibrio atlanticus (strain LGP32) (Vibrio splendidus (strain Mel32)).